Reading from the N-terminus, the 250-residue chain is 2,3-bisphosphoglycerate-dependent phosphoglycerate mutase (250 aa).

Substrate contacts are provided by residues 10–17 (RHGESQWN), 23–24 (TG), Arg-62, 89–92 (ERHY), Lys-100, 116–117 (RR), and 185–186 (GN). The Tele-phosphohistidine intermediate role is filled by His-11. The active-site Proton donor/acceptor is the Glu-89.

This sequence belongs to the phosphoglycerate mutase family. BPG-dependent PGAM subfamily. In terms of assembly, homodimer.

The catalysed reaction is (2R)-2-phosphoglycerate = (2R)-3-phosphoglycerate. The protein operates within carbohydrate degradation; glycolysis; pyruvate from D-glyceraldehyde 3-phosphate: step 3/5. Catalyzes the interconversion of 2-phosphoglycerate and 3-phosphoglycerate. The polypeptide is 2,3-bisphosphoglycerate-dependent phosphoglycerate mutase (Pectobacterium carotovorum subsp. carotovorum (strain PC1)).